The chain runs to 338 residues: Fructose-1,6-bisphosphatase class 1 (338 aa).

Residues Glu-91, Asp-113, Leu-115, and Asp-116 each coordinate Mg(2+). Substrate-binding positions include Asp-116–Ser-119, Asn-208, and Lys-274. Mg(2+) is bound at residue Glu-280.

It belongs to the FBPase class 1 family. In terms of assembly, homotetramer. It depends on Mg(2+) as a cofactor.

Its subcellular location is the cytoplasm. It carries out the reaction beta-D-fructose 1,6-bisphosphate + H2O = beta-D-fructose 6-phosphate + phosphate. The protein operates within carbohydrate biosynthesis; gluconeogenesis. The sequence is that of Fructose-1,6-bisphosphatase class 1 from Ralstonia pickettii (strain 12J).